The following is a 391-amino-acid chain: Multidrug resistance protein MdtL (391 aa).

The next 12 helical transmembrane spans lie at 4–24, 42–62, 69–89, 93–113, 134–154, 158–178, 203–222, 245–265, 269–289, 293–313, 331–351, and 356–376; these read FLICSFALVLLYPAGIDMYLV, IAFSVYLAGMAAAMLFAGKVA, PVAIPGAALFIIASVFCSLAE, LFLAGRFLQGLGAGCCYVVAF, GITCIIPVLAPVLGHLIMLNF, SLFWTMAIMGVAVLMLSLFIL, FFLSRVVITTLSVSVILTFV, ALTAGVSMTVSFSTPFALGIF, TLMITSQVLFLAAGITLAVSP, VSLFGITLICAGFSVGFGVAM, LGIAQVCGSSLWIWLAAVVGI, and MLIGILIACSIVSLLLIMFVA.

It belongs to the major facilitator superfamily. DHA1 family. MdtL (TC 2.A.1.2.22) subfamily.

Its subcellular location is the cell inner membrane. Its function is as follows. Confers resistance to chloramphenicol. This chain is Multidrug resistance protein MdtL, found in Escherichia coli O81 (strain ED1a).